The sequence spans 2615 residues: Probable serine/threonine-protein kinase roco7 (2615 aa).

Residues M1–S13 are compositionally biased toward low complexity. Disordered regions lie at residues M1–Q35, S275–N297, Q533–N623, and S946–Q998. Composition is skewed to low complexity over residues Q533–S560, N567–N614, and S946–S996. Residues S1441–L1631 enclose the COR domain. The region spanning L1775–F2042 is the Protein kinase domain. ATP is bound by residues L1781 to V1789 and K1802. Residue D1899 is the Proton acceptor of the active site. 2 disordered regions span residues Q2061–G2158 and G2176–G2209. Composition is skewed to low complexity over residues S2073–G2158 and N2182–G2209. WD repeat units lie at residues G2491–D2527 and R2533–S2574.

The protein belongs to the protein kinase superfamily. TKL Ser/Thr protein kinase family. ROCO subfamily.

It catalyses the reaction L-seryl-[protein] + ATP = O-phospho-L-seryl-[protein] + ADP + H(+). The catalysed reaction is L-threonyl-[protein] + ATP = O-phospho-L-threonyl-[protein] + ADP + H(+). The sequence is that of Probable serine/threonine-protein kinase roco7 (roco7) from Dictyostelium discoideum (Social amoeba).